Here is a 210-residue protein sequence, read N- to C-terminus: Probable GTP-binding protein EngB (210 aa).

One can recognise an EngB-type G domain in the interval 24–199 (QGCEVAFAGR…WEVLGRWLDL (176 aa)). Residues 32 to 39 (GRSNAGKS), 59 to 63 (GRTRM), 77 to 80 (DLPG), 144 to 147 (TKSD), and 178 to 180 (FSS) each bind GTP. Ser-39 and Thr-61 together coordinate Mg(2+).

It belongs to the TRAFAC class TrmE-Era-EngA-EngB-Septin-like GTPase superfamily. EngB GTPase family. Requires Mg(2+) as cofactor.

Functionally, necessary for normal cell division and for the maintenance of normal septation. The sequence is that of Probable GTP-binding protein EngB from Methylococcus capsulatus (strain ATCC 33009 / NCIMB 11132 / Bath).